The chain runs to 335 residues: Nucleoid-associated protein SeAg_B2375 (335 aa).

The protein belongs to the YejK family.

The protein localises to the cytoplasm. It localises to the nucleoid. This Salmonella agona (strain SL483) protein is Nucleoid-associated protein SeAg_B2375.